A 304-amino-acid polypeptide reads, in one-letter code: Probable HTH-type transcriptional regulator LgoR (304 aa).

Residues 1–70 (MSRSQNLRHN…VGNDYVIARK (70 aa)) form the HTH gntR-type domain. The H-T-H motif DNA-binding region spans 31-50 (QSALAEMYNISRTTVRHILS).

May be a positive transcriptional regulator for lgoD and/or lgoT. Is essential for growth on L-galactonate as the sole carbon source. This chain is Probable HTH-type transcriptional regulator LgoR (lgoR), found in Escherichia coli (strain K12).